A 212-amino-acid polypeptide reads, in one-letter code: Large ribosomal subunit protein uL3 (212 aa).

The interval 136–155 (THGNSLSHRSNGSIGQNQTP) is disordered. The residue at position 153 (glutamine 153) is an N5-methylglutamine.

Belongs to the universal ribosomal protein uL3 family. As to quaternary structure, part of the 50S ribosomal subunit. Forms a cluster with proteins L14 and L19. In terms of processing, methylated by PrmB.

Its function is as follows. One of the primary rRNA binding proteins, it binds directly near the 3'-end of the 23S rRNA, where it nucleates assembly of the 50S subunit. The sequence is that of Large ribosomal subunit protein uL3 from Shewanella baltica (strain OS223).